A 105-amino-acid polypeptide reads, in one-letter code: Fe-S protein maturation auxiliary factor PG_1777 (105 aa).

This sequence belongs to the Fe-S cluster assembly domain superfamily. MIP18-like family. Putative homodimer; may be disulfide-linked.

In terms of biological role, iron binding protein that protects DNA from Fenton chemistry-mediated damage caused by hydrogen peroxide induced oxidative stress. May be involved in iron-sulfur cluster assembly. This Porphyromonas gingivalis (strain ATCC BAA-308 / W83) protein is Fe-S protein maturation auxiliary factor PG_1777.